Consider the following 188-residue polypeptide: UPF0301 protein XAC2918 (188 aa).

The protein belongs to the UPF0301 (AlgH) family.

This chain is UPF0301 protein XAC2918, found in Xanthomonas axonopodis pv. citri (strain 306).